The sequence spans 287 residues: MSQKHIDELSGVETTGHEWDGIQELNNPMPRWWIWTFYVTILWAIGYAIAYPAIPMITSATNGYLGYSTRAELQQDLNLAKSSQTEFHDLIAAKTVEEIDADPALRKFAIAGGASAFKVNCAPCHGSGASGGPGFPNLNDDDWLWGGDLNAIQATISHGIRFDGDTDSHSSEMPPFAGVLEPIQMKQVAAFVWGLTNTPSDVGLAAAGKQVFFDNCAPCHGEDAKGKVEMGAPDLADAIWLKSRGEDAILRQVASPKHGVMPAWAARLGDTTVNELTIFVHALGGGT.

Residues 1-33 are Cytoplasmic-facing; sequence MSQKHIDELSGVETTGHEWDGIQELNNPMPRWW. A helical transmembrane segment spans residues 34 to 54; that stretch reads IWTFYVTILWAIGYAIAYPAI. At 55 to 287 the chain is on the periplasmic side; the sequence is PMITSATNGY…IFVHALGGGT (233 aa). Cytochrome c domains lie at 108–196 and 203–284; these read FAIA…WGLT and GLAA…HALG. The heme c site is built by Cys-121, Cys-124, His-125, Met-173, Cys-216, Cys-219, His-220, and Met-261.

The protein belongs to the CcoP / FixP family. Component of the cbb3-type cytochrome c oxidase at least composed of FixN, FixO, FixQ and FixP. The cofactor is heme c.

It is found in the cell inner membrane. It functions in the pathway energy metabolism; oxidative phosphorylation. C-type cytochrome. Part of the cbb3-type cytochrome c oxidase complex. FixP subunit is required for transferring electrons from donor cytochrome c via its heme groups to FixO subunit. From there, electrons are shuttled to the catalytic binuclear center of FixN subunit where oxygen reduction takes place. The complex also functions as a proton pump. The chain is Cbb3-type cytochrome c oxidase subunit FixP from Rhizobium etli (strain ATCC 51251 / DSM 11541 / JCM 21823 / NBRC 15573 / CFN 42).